The primary structure comprises 589 residues: Probable methyltransferase PMT23 (589 aa).

Topologically, residues 1–4 are cytoplasmic; it reads MAIS. Residues 5 to 25 traverse the membrane as a helical; Signal-anchor for type II membrane protein segment; the sequence is VQHVVVLLLSTLLIAITFFLF. Over 26-589 the chain is Lumenal; sequence TSDNARFPFP…FWRPAKPELR (564 aa). Residues Asn70, Asn375, and Asn442 are each glycosylated (N-linked (GlcNAc...) asparagine).

This sequence belongs to the methyltransferase superfamily.

It is found in the golgi apparatus membrane. The polypeptide is Probable methyltransferase PMT23 (Arabidopsis thaliana (Mouse-ear cress)).